A 352-amino-acid chain; its full sequence is DNA polymerase IV (352 aa).

The 185-residue stretch at 3-187 (VLFVDFDYFY…LDIADVPGIG (185 aa)) folds into the UmuC domain. Residues Asp-7 and Asp-105 each coordinate Mg(2+). The active site involves Glu-106.

Belongs to the DNA polymerase type-Y family. In terms of assembly, monomer. Interacts with the PCNA heterotrimer via PCNA1. Mg(2+) is required as a cofactor.

The protein resides in the cytoplasm. It carries out the reaction DNA(n) + a 2'-deoxyribonucleoside 5'-triphosphate = DNA(n+1) + diphosphate. Its function is as follows. Poorly processive, error-prone DNA polymerase involved in untargeted mutagenesis. Copies undamaged DNA at stalled replication forks, which arise in vivo from mismatched or misaligned primer ends. These misaligned primers can be extended by PolIV. Exhibits no 3'-5' exonuclease (proofreading) activity. It is involved in translesional synthesis. The chain is DNA polymerase IV (dbh) from Saccharolobus solfataricus (strain ATCC 35092 / DSM 1617 / JCM 11322 / P2) (Sulfolobus solfataricus).